The following is a 434-amino-acid chain: Beta-enolase (434 aa).

N-acetylalanine is present on alanine 2. Phosphothreonine is present on threonine 72. Phosphoserine is present on residues serine 83 and serine 157. Substrate is bound by residues histidine 158 and glutamate 167. Position 176 is a phosphoserine (serine 176). Threonine 205 is subject to Phosphothreonine. Glutamate 210 acts as the Proton donor in catalysis. The residue at position 229 (threonine 229) is a Phosphothreonine. At tyrosine 236 the chain carries Phosphotyrosine. Aspartate 245 contacts Mg(2+). Serine 263 carries the phosphoserine modification. 2 residues coordinate substrate: glutamate 293 and aspartate 318. 2 residues coordinate Mg(2+): glutamate 293 and aspartate 318. Residue lysine 343 is the Proton acceptor of the active site. Substrate is bound by residues 370–373 (SHRS) and lysine 394.

It belongs to the enolase family. As to quaternary structure, mammalian enolase is composed of 3 isozyme subunits, alpha, beta and gamma, which can form homodimers or heterodimers which are cell-type and development-specific. Interacts with PNKD. Requires Mg(2+) as cofactor. The alpha/alpha homodimer is expressed in embryo and in most adult tissues. The alpha/beta heterodimer and the beta/beta homodimer are found in striated muscle, and the alpha/gamma heterodimer and the gamma/gamma homodimer in neurons.

It localises to the cytoplasm. The catalysed reaction is (2R)-2-phosphoglycerate = phosphoenolpyruvate + H2O. Its pathway is carbohydrate degradation; glycolysis; pyruvate from D-glyceraldehyde 3-phosphate: step 4/5. Its function is as follows. Glycolytic enzyme that catalyzes the conversion of 2-phosphoglycerate to phosphoenolpyruvate. Appears to have a function in striated muscle development and regeneration. This is Beta-enolase (Eno3) from Rattus norvegicus (Rat).